The chain runs to 126 residues: Protein ApaG (126 aa).

The region spanning 2 to 126 (RRKPYELKVE…FSLAIPRRLH (125 aa)) is the ApaG domain.

The sequence is that of Protein ApaG from Methylococcus capsulatus (strain ATCC 33009 / NCIMB 11132 / Bath).